We begin with the raw amino-acid sequence, 372 residues long: Tyrosine--tRNA ligase (372 aa).

L-tyrosine-binding residues include Tyr-37, Tyr-169, Gln-173, Asp-176, and Gln-191. Positions 246-250 (KMSKS) match the 'KMSKS' region motif. Lys-249 is an ATP binding site.

It belongs to the class-I aminoacyl-tRNA synthetase family. TyrS type 4 subfamily. Homodimer.

It localises to the cytoplasm. It carries out the reaction tRNA(Tyr) + L-tyrosine + ATP = L-tyrosyl-tRNA(Tyr) + AMP + diphosphate + H(+). Functionally, catalyzes the attachment of tyrosine to tRNA(Tyr) in a two-step reaction: tyrosine is first activated by ATP to form Tyr-AMP and then transferred to the acceptor end of tRNA(Tyr). This Pyrobaculum arsenaticum (strain DSM 13514 / JCM 11321 / PZ6) protein is Tyrosine--tRNA ligase.